Here is a 553-residue protein sequence, read N- to C-terminus: ATP synthase F(1) complex subunit alpha, mitochondrial (553 aa).

Residues M1–L43 constitute a mitochondrion transit peptide. Phosphoserine occurs at positions 53 and 65. S76 carries the post-translational modification Phosphoserine; alternate. Residue S76 is glycosylated (O-linked (GlcNAc) serine; alternate). A Phosphoserine modification is found at S106. N6-acetyllysine occurs at positions 123, 126, and 132. Position 134 is a phosphothreonine (T134). The residue at position 161 (K161) is an N6-acetyllysine; alternate. Residue K161 is modified to N6-succinyllysine; alternate. S166 carries the post-translational modification Phosphoserine. Residue K167 is modified to N6-acetyllysine; alternate. K167 carries the post-translational modification N6-succinyllysine; alternate. S184 bears the Phosphoserine mark. The residue at position 204 (R204) is an Omega-N-methylarginine. Residues Q215, G217, K218, T219, and S220 each coordinate ATP. T219 is a binding site for Mg(2+). N6-acetyllysine; alternate occurs at positions 230 and 239. An N6-succinyllysine; alternate mark is found at K230 and K239. K240 is subject to N6-acetyllysine. Residues K261 and K305 each carry the N6-acetyllysine; alternate modification. K261 and K305 each carry N6-succinyllysine; alternate. D312 is a binding site for Mg(2+). K427 is modified (N6-acetyllysine; alternate). K427 is subject to N6-succinyllysine; alternate. K434 carries the N6-acetyllysine modification. The ATP site is built by Q473 and Q475. 4 positions are modified to N6-acetyllysine; alternate: K498, K506, K531, and K539. N6-succinyllysine; alternate is present on residues K498, K506, K531, and K539. At K541 the chain carries N6-acetyllysine.

This sequence belongs to the ATPase alpha/beta chains family. In terms of assembly, homotrimer. Component of the ATP synthase complex composed at least of ATP5F1A/subunit alpha, ATP5F1B/subunit beta, ATP5MC1/subunit c (homooctomer), MT-ATP6/subunit a, MT-ATP8/subunit 8, ATP5ME/subunit e, ATP5MF/subunit f, ATP5MG/subunit g, ATP5MK/subunit k, ATP5MJ/subunit j, ATP5F1C/subunit gamma, ATP5F1D/subunit delta, ATP5F1E/subunit epsilon, ATP5PF/subunit F6, ATP5PB/subunit b, ATP5PD/subunit d, ATP5PO/subunit OSCP. ATP synthase complex consists of a soluble F(1) head domain (subunits alpha(3) and beta(3)) - the catalytic core - and a membrane F(0) domain - the membrane proton channel (subunits c, a, 8, e, f, g, k and j). These two domains are linked by a central stalk (subunits gamma, delta, and epsilon) rotating inside the F1 region and a stationary peripheral stalk (subunits F6, b, d, and OSCP). Interacts with ATPAF2. Interacts with HRG; the interaction occurs on the surface of T-cells and alters the cell morphology when associated with concanavalin (in vitro). Interacts with PLG (angiostatin peptide); the interaction inhibits most of the angiogenic properties of angiostatin. Interacts with BLOC1S1. Interacts with BCL2L1 isoform BCL-X(L); the interaction mediates the association of BCL2L1 isoform BCL-X(L) with the mitochondrial membrane F(1)F(0) ATP synthase and enhances neurons metabolic efficiency. Interacts with CLN5 and PPT1. Interacts with S100A1; this interaction increases F1-ATPase activity. Interacts with ABCB7; this interaction allows the regulation of cellular iron homeostasis and cellular reactive oxygen species (ROS) levels in cardiomyocytes. In terms of processing, acetylated on lysine residues. BLOC1S1 is required for acetylation. As to expression, expressed in flagella of epididymal sperm.

The protein localises to the mitochondrion. Its subcellular location is the mitochondrion inner membrane. The protein resides in the cell membrane. Subunit alpha, of the mitochondrial membrane ATP synthase complex (F(1)F(0) ATP synthase or Complex V) that produces ATP from ADP in the presence of a proton gradient across the membrane which is generated by electron transport complexes of the respiratory chain. ATP synthase complex consist of a soluble F(1) head domain - the catalytic core - and a membrane F(1) domain - the membrane proton channel. These two domains are linked by a central stalk rotating inside the F(1) region and a stationary peripheral stalk. During catalysis, ATP synthesis in the catalytic domain of F(1) is coupled via a rotary mechanism of the central stalk subunits to proton translocation. In vivo, can only synthesize ATP although its ATP hydrolase activity can be activated artificially in vitro. With the catalytic subunit beta (ATP5F1B), forms the catalytic core in the F(1) domain. Subunit alpha does not bear the catalytic high-affinity ATP-binding sites. The polypeptide is ATP synthase F(1) complex subunit alpha, mitochondrial (Rattus norvegicus (Rat)).